Here is a 366-residue protein sequence, read N- to C-terminus: UDP-N-acetylglucosamine--N-acetylmuramyl-(pentapeptide) pyrophosphoryl-undecaprenol N-acetylglucosamine transferase (366 aa).

UDP-N-acetyl-alpha-D-glucosamine-binding positions include 10–12 (TGG), asparagine 124, arginine 165, serine 192, isoleucine 247, and glutamine 292.

It belongs to the glycosyltransferase 28 family. MurG subfamily.

The protein localises to the cell inner membrane. The catalysed reaction is di-trans,octa-cis-undecaprenyl diphospho-N-acetyl-alpha-D-muramoyl-L-alanyl-D-glutamyl-meso-2,6-diaminopimeloyl-D-alanyl-D-alanine + UDP-N-acetyl-alpha-D-glucosamine = di-trans,octa-cis-undecaprenyl diphospho-[N-acetyl-alpha-D-glucosaminyl-(1-&gt;4)]-N-acetyl-alpha-D-muramoyl-L-alanyl-D-glutamyl-meso-2,6-diaminopimeloyl-D-alanyl-D-alanine + UDP + H(+). It functions in the pathway cell wall biogenesis; peptidoglycan biosynthesis. Its function is as follows. Cell wall formation. Catalyzes the transfer of a GlcNAc subunit on undecaprenyl-pyrophosphoryl-MurNAc-pentapeptide (lipid intermediate I) to form undecaprenyl-pyrophosphoryl-MurNAc-(pentapeptide)GlcNAc (lipid intermediate II). The sequence is that of UDP-N-acetylglucosamine--N-acetylmuramyl-(pentapeptide) pyrophosphoryl-undecaprenol N-acetylglucosamine transferase from Geotalea daltonii (strain DSM 22248 / JCM 15807 / FRC-32) (Geobacter daltonii).